Consider the following 163-residue polypeptide: Transcription elongation factor GreB (163 aa).

Residues 54 to 76 adopt a coiled-coil conformation; that stretch reads GKRRMREIDRRIRFLTKRLEAAV.

The protein belongs to the GreA/GreB family. GreB subfamily.

Necessary for efficient RNA polymerase transcription elongation past template-encoded arresting sites. The arresting sites in DNA have the property of trapping a certain fraction of elongating RNA polymerases that pass through, resulting in locked ternary complexes. Cleavage of the nascent transcript by cleavage factors such as GreA or GreB allows the resumption of elongation from the new 3'terminus. GreB releases sequences of up to 9 nucleotides in length. The chain is Transcription elongation factor GreB from Neisseria meningitidis serogroup A / serotype 4A (strain DSM 15465 / Z2491).